A 267-amino-acid polypeptide reads, in one-letter code: 5'-nucleotidase SurE (267 aa).

The a divalent metal cation site is built by aspartate 9, aspartate 10, serine 40, and asparagine 97.

The protein belongs to the SurE nucleotidase family. A divalent metal cation is required as a cofactor.

Its subcellular location is the cytoplasm. It carries out the reaction a ribonucleoside 5'-phosphate + H2O = a ribonucleoside + phosphate. In terms of biological role, nucleotidase that shows phosphatase activity on nucleoside 5'-monophosphates. In Helicobacter pylori (strain HPAG1), this protein is 5'-nucleotidase SurE.